Consider the following 138-residue polypeptide: Cysteine desulfuration protein SufE (138 aa).

C51 functions as the Cysteine persulfide intermediate in the catalytic mechanism.

The protein belongs to the SufE family. In terms of assembly, homodimer. Interacts with SufS.

It localises to the cytoplasm. The protein operates within cofactor biosynthesis; iron-sulfur cluster biosynthesis. In terms of biological role, participates in cysteine desulfuration mediated by SufS. Cysteine desulfuration mobilizes sulfur from L-cysteine to yield L-alanine and constitutes an essential step in sulfur metabolism for biosynthesis of a variety of sulfur-containing biomolecules. Functions as a sulfur acceptor for SufS, by mediating the direct transfer of the sulfur atom from the S-sulfanylcysteine of SufS, an intermediate product of cysteine desulfuration process. The protein is Cysteine desulfuration protein SufE of Escherichia coli O81 (strain ED1a).